The sequence spans 738 residues: MSPSPTRLTVRSVDPLKTPNLTSRAPVRPSRKSKWAETTAHLQRKPCHSRSNSPAWEISGPPWSSLDHLDPIRHQSLQPSDFGARTPTGAHPGLGAYSPPPEEAMPFEFNEPAQEDRCQPPLQVPDLAPGGPEAWVSRALPAEPGNLGFENTGFREDYSPPPEESVPFQLDGEEFGGDSPPPDSASHATNRHWRFEFPTVAVPSTLCLRPARTRLPSGSRAPLADHARLSDLLTSHTTFPQWRSPDPCLRLAEPPLGSTTTPLSIWTAPQSQVMARPSKSREPQLRASTQRDPHLSDKQPRQETALSAAPLQRRQKSPPSSEEKDPPPNLKQCISSQLLLRSPERTLPKPIRTQLHTQFFRSVLRKSEESQPCPPIFRLLLKMRAQMSGQNQTEGQPQPPLPSPKTTENQPPPPPPSQPPSQPLSQPPSQPPSQPPSQLPRQSLTPKPSLPPGQSPTPKRSPQPRQPLPRRRSLPPGQPPSPLRSPLPGLSLLPEPIQPPGLSLEPQRCQPLLGQPPLEQPMQVLWSGEPGHSRLLQPLGHPSLPAQQLPPEQPLLPAQSLPAGQPLPPQAGPILDPPARRSRLLTRLLRGLLRGRVPGLTNTNVAEAAAGMRLRPASARSSPPAMSRKKGPLAASSGFCGETAALASPGATQSGATRSATSSPEPSEAASVYLSVPDHDPSAPGRPRILWKRGANRCAKKPWRCESRSAQIRNAASSSTSNWRRRRWTTCVHTACCF.

Disordered regions lie at residues 1-105 (MSPS…EEAM), 155-188 (REDYSPPPEESVPFQLDGEEFGGDSPPPDSASHA), 237-350 (TTFP…LPKP), 387-516 (MSGQ…LGQP), 528-578 (GEPG…LDPP), and 611-689 (GMRL…RPRI). Positions 257-273 (GSTTTPLSIWTAPQSQV) are enriched in polar residues. Over residues 279–301 (KSREPQLRASTQRDPHLSDKQPR) the composition is skewed to basic and acidic residues. Over residues 387-396 (MSGQNQTEGQ) the composition is skewed to polar residues. 3 stretches are compositionally biased toward pro residues: residues 410–438 (QPPPPPPSQPPSQPLSQPPSQPPSQPPSQ), 448–467 (PSLPPGQSPTPKRSPQPRQP), and 476–485 (PGQPPSPLRS). Composition is skewed to low complexity over residues 542–564 (PSLPAQQLPPEQPLLPAQSLPAG), 615–626 (RPASARSSPPAM), and 656–671 (ATRSATSSPEPSEAAS).

This sequence belongs to the ALEX family. In terms of assembly, interacts with the N-terminal region of the XLas isoforms of guanine nucleotide-binding protein G(s) subunit alpha.

It localises to the cell membrane. It is found in the cell projection. The protein resides in the ruffle. Functionally, may inhibit the adenylyl cyclase-stimulating activity of guanine nucleotide-binding protein G(s) subunit alpha which is produced from the same locus in a different open reading frame. The protein is Protein ALEX of Rattus norvegicus (Rat).